The primary structure comprises 547 residues: MARYIFITGGVVSSLGKGLASAALGALLQARGFTVRLRKLDPYLNVDPGTMSPFEHGEVFVTDDGAETDLDLGHYERFTGVSARKTDSVSSGRIYSNVLEKERRGAYLGKTIQVIPHVTNEIKDFLAVGEDEVDFMLCEIGGTVGDIEGLPFFEAIRQFAQERARSQCIFVHLTLLPWLAASGELKTKPTQHSVKELRSIGIAPDVLVCRSEHPIPEKERAKIALFCNVRPDAVIPAYDLKTIYEAPLAYHRAGLDQAVLDAFQISPAPRPDLTRWEDVMDRLENAEGQVRIAVVGKYTQLEDAYKSIAEALTHGGMANRVRVRADWVDSEKLEGEGAHLLDGYNGIIVPGGFGERGTEGMIAAAKYAREKKVPYLGICLGMQMAVIEGARNLAGMPDAGSEEFDHEAGKTRFTPVVYHLKEWVQGNYTVQRKLTDDKGGTMRLGAYTAVLVPGSKISEIYDGALEIEDRHRHRYEVDAKYRDQLEAAGLSFSGMSPDGRLPEVVEYRDHPWFIGVQSHPELKSKPFQPAPLFAGFIRAAMDNERLV.

Residues 1–265 (MARYIFITGG…DQAVLDAFQI (265 aa)) form an amidoligase domain region. A CTP-binding site is contributed by Ser13. Ser13 serves as a coordination point for UTP. ATP is bound by residues 14-19 (SLGKGL) and Asp71. Mg(2+) contacts are provided by Asp71 and Glu139. CTP is bound by residues 146–148 (DIE), 186–191 (KTKPTQ), and Lys222. Residues 186–191 (KTKPTQ) and Lys222 each bind UTP. A Glutamine amidotransferase type-1 domain is found at 291–546 (RIAVVGKYTQ…IRAAMDNERL (256 aa)). Position 352 (Gly352) interacts with L-glutamine. The active-site Nucleophile; for glutamine hydrolysis is the Cys379. Residues 380–383 (LGMQ), Glu403, and Arg474 each bind L-glutamine. Catalysis depends on residues His519 and Glu521.

Belongs to the CTP synthase family. Homotetramer.

It catalyses the reaction UTP + L-glutamine + ATP + H2O = CTP + L-glutamate + ADP + phosphate + 2 H(+). The catalysed reaction is L-glutamine + H2O = L-glutamate + NH4(+). It carries out the reaction UTP + NH4(+) + ATP = CTP + ADP + phosphate + 2 H(+). Its pathway is pyrimidine metabolism; CTP biosynthesis via de novo pathway; CTP from UDP: step 2/2. With respect to regulation, allosterically activated by GTP, when glutamine is the substrate; GTP has no effect on the reaction when ammonia is the substrate. The allosteric effector GTP functions by stabilizing the protein conformation that binds the tetrahedral intermediate(s) formed during glutamine hydrolysis. Inhibited by the product CTP, via allosteric rather than competitive inhibition. In terms of biological role, catalyzes the ATP-dependent amination of UTP to CTP with either L-glutamine or ammonia as the source of nitrogen. Regulates intracellular CTP levels through interactions with the four ribonucleotide triphosphates. In Paracoccus denitrificans (strain Pd 1222), this protein is CTP synthase.